Here is a 238-residue protein sequence, read N- to C-terminus: Serine protease SplE (238 aa).

Positions 1–36 (MNKNIIIKSIAALTILTSVTGVGTTVVEGIQQTAKA) are cleaved as a signal peptide. Catalysis depends on charge relay system residues histidine 75, aspartate 113, and serine 191.

It belongs to the peptidase S1B family.

It localises to the secreted. The protein is Serine protease SplE (splE) of Staphylococcus aureus (strain USA300).